Consider the following 299-residue polypeptide: Phosphoribosylaminoimidazole-succinocarboxamide synthase (299 aa).

This sequence belongs to the SAICAR synthetase family.

The enzyme catalyses 5-amino-1-(5-phospho-D-ribosyl)imidazole-4-carboxylate + L-aspartate + ATP = (2S)-2-[5-amino-1-(5-phospho-beta-D-ribosyl)imidazole-4-carboxamido]succinate + ADP + phosphate + 2 H(+). Its pathway is purine metabolism; IMP biosynthesis via de novo pathway; 5-amino-1-(5-phospho-D-ribosyl)imidazole-4-carboxamide from 5-amino-1-(5-phospho-D-ribosyl)imidazole-4-carboxylate: step 1/2. The protein is Phosphoribosylaminoimidazole-succinocarboxamide synthase (ade7) of Schizosaccharomyces pombe (strain 972 / ATCC 24843) (Fission yeast).